Reading from the N-terminus, the 319-residue chain is Peroxidase 62 (319 aa).

Positions 1-22 are cleaved as a signal peptide; the sequence is MGLVRSFALVIVFLSCLIAVYG. 4 cysteine pairs are disulfide-bonded: cysteine 34–cysteine 110, cysteine 67–cysteine 72, cysteine 116–cysteine 315, and cysteine 195–cysteine 226. Residue histidine 65 is the Proton acceptor of the active site. Positions 66, 69, 71, 73, and 75 each coordinate Ca(2+). Proline 157 contributes to the substrate binding site. Residue histidine 188 participates in heme b binding. Threonine 189 is a binding site for Ca(2+). The N-linked (GlcNAc...) asparagine glycan is linked to asparagine 204. Ca(2+)-binding residues include aspartate 239, serine 242, and aspartate 247. N-linked (GlcNAc...) asparagine glycosylation is present at asparagine 253.

This sequence belongs to the peroxidase family. Classical plant (class III) peroxidase subfamily. Heme b is required as a cofactor. Requires Ca(2+) as cofactor. As to expression, mainly expressed in roots.

The protein localises to the secreted. The catalysed reaction is 2 a phenolic donor + H2O2 = 2 a phenolic radical donor + 2 H2O. In terms of biological role, removal of H(2)O(2), oxidation of toxic reductants, biosynthesis and degradation of lignin, suberization, auxin catabolism, response to environmental stresses such as wounding, pathogen attack and oxidative stress. These functions might be dependent on each isozyme/isoform in each plant tissue. In Arabidopsis thaliana (Mouse-ear cress), this protein is Peroxidase 62 (PER62).